Reading from the N-terminus, the 287-residue chain is Lactamase-like protein nscB (287 aa).

Zn(2+)-binding residues include H62, H64, D66, and H67. Catalysis depends on D66, which acts as the Proton donor/acceptor.

Belongs to the metallo-beta-lactamase superfamily. The cofactor is Zn(2+).

Its pathway is secondary metabolite biosynthesis. In terms of biological role, lactamase-like protein; part of the gene cluster that mediates the biosynthesis of neosartoricin B, a prenylated anthracenone that probably exhibits T-cell antiproliferative activity, suggestive of a physiological role as an immunosuppressive agent. The non-reducing polyketide synthase nscA probably synthesizes and cyclizes the decaketide backbone. The hydrolase nscB then mediates the product release through hydrolysis followed by spontaneous decarboxylation. The prenyltransferase nscD catalyzes the addition of the dimethylallyl group to the aromatic C5. The FAD-dependent monooxygenase nscC is then responsible for the stereospecific hydroxylation at C2. Neosartoricin B can be converted into two additional compounds neosartoricins C and D. Neosartoricin C is a spirocyclic compound that is cyclized through the attack of C3 hydroxyl on C14, followed by dehydration. On the other hand, neosartoricin D is a further cyclized compound in which attack of C2 on C14 in neosartoricin C results in the formation of the acetal-containing dioxabicyclo-octanone ring. Both of these compounds are novel and possibly represent related metabolites of the gene cluster. The sequence is that of Lactamase-like protein nscB from Trichophyton verrucosum (strain HKI 0517).